The primary structure comprises 595 residues: Sucrose transport protein SUT4 (595 aa).

Over 1–61 the chain is Cytoplasmic; sequence MDSAAGGGGL…PAARTTTTRK (61 aa). Positions 29 to 55 are disordered; the sequence is SLNGGTPRGGSPKDPDATHQQGPPAAR. A helical transmembrane segment spans residues 62–82; that stretch reads LVLACMVAAGVQFGWALQLSL. Residues 83–97 are Extracellular-facing; sequence LTPYIQTLGIDHAMA. Residues 98–118 form a helical membrane-spanning segment; sequence SFIWLCGPITGFVVQPCVGVW. The Cytoplasmic portion of the chain corresponds to 119–130; that stretch reads SDKCRSKYGRRR. The helical transmembrane segment at 131-151 threads the bilayer; the sequence is PFILAGCLMICFAVTLIGFSA. Over 152–173 the chain is Extracellular; it reads DLGYILGDTTEHCSTYKGSRFR. Residues 174–194 form a helical membrane-spanning segment; that stretch reads AAIIFVLGFWMLDLANNTVQG. The Cytoplasmic segment spans residues 195 to 213; the sequence is PARALLADLSGPDQCNSAN. A helical membrane pass occupies residues 214-234; that stretch reads AIFCTWMAVGNVLGFSSGASG. The Extracellular segment spans residues 235 to 256; sequence NWHKWFPFLMTRACCEACSNLK. The chain crosses the membrane as a helical span at residues 257-277; the sequence is AAFLVAVVFLLFCMSVTLYFA. At 278–365 the chain is on the cytoplasmic side; the sequence is EEIPLEPTDA…LTSMRHLPPG (88 aa). The segment at 291-340 is disordered; sequence SDSAPLLNGSRDDNNASNEPRNGALPNGHTDGSNVPANSNAEDSNSNREN. The segment covering 320-334 has biased composition (polar residues); the sequence is TDGSNVPANSNAEDS. The helical transmembrane segment at 366-386 threads the bilayer; the sequence is MYSVLLVMALTWLSWFPFFLF. Residues 387–417 lie on the Extracellular side of the membrane; it reads DTDWMGREVYHGDPNGNLSERKAYDNGVREG. N403 is a glycosylation site (N-linked (GlcNAc...) asparagine). Residues 418–438 form a helical membrane-spanning segment; sequence AFGLLLNSVVLGIGSFLVDPL. Residues 439-447 are Cytoplasmic-facing; the sequence is CRLMGARLV. The chain crosses the membrane as a helical span at residues 448 to 468; sequence WAISNFTVFICMLATAILSWI. Residues 469–491 are Extracellular-facing; that stretch reads SFDLYSSKLHHIIGANKTVKNSA. Residue N484 is glycosylated (N-linked (GlcNAc...) asparagine). The helical transmembrane segment at 492-512 threads the bilayer; it reads LIVFSLLGLPLSITYSVPFSV. Topologically, residues 513 to 525 are cytoplasmic; sequence TAELTAGTGGGQG. Residues 526–546 form a helical membrane-spanning segment; the sequence is LATGVLNLAIVVPQIVVSLGA. Residues 547–556 are Extracellular-facing; the sequence is GPWDALFGGG. The chain crosses the membrane as a helical span at residues 557–577; that stretch reads NVPAFALASVFSLGAGVLAVL. The Cytoplasmic portion of the chain corresponds to 578–595; it reads KLPKLPNSYRSAGFHGFG.

Belongs to the glycoside-pentoside-hexuronide (GPH) cation symporter transporter (TC 2.A.2.4) family. As to quaternary structure, homodimer.

Its subcellular location is the cell membrane. The protein operates within glycan biosynthesis; sucrose metabolism. Responsible for the transport of sucrose into the cell, with the concomitant uptake of protons (symport system). May also transport other glucosides. This Oryza sativa subsp. indica (Rice) protein is Sucrose transport protein SUT4 (SUT4).